The sequence spans 317 residues: Transmembrane and death domain protein 1 (317 aa).

A signal peptide spans methionine 1–alanine 27. Residues methionine 28–proline 218 are Extracellular-facing. Basic and acidic residues predominate over residues glutamate 62–arginine 73. Residues glutamate 62–valine 106 form a disordered region. Positions leucine 66–leucine 150 constitute a Death domain. The N-linked (GlcNAc...) asparagine glycan is linked to asparagine 78. Residues leucine 219 to leucine 239 traverse the membrane as a helical segment. At leucine 240–leucine 317 the chain is on the cytoplasmic side.

It localises to the membrane. In Homo sapiens (Human), this protein is Transmembrane and death domain protein 1.